Consider the following 339-residue polypeptide: Phospho-N-acetylmuramoyl-pentapeptide-transferase (339 aa).

Helical transmembrane passes span Thr-4–Ile-24, Met-53–Leu-73, Ala-80–Leu-100, Gly-113–Val-133, Leu-145–Val-165, Gly-176–Ala-196, Phe-202–Asn-222, Val-228–Thr-248, Trp-253–Val-273, and Val-318–Tyr-338.

The protein belongs to the glycosyltransferase 4 family. MraY subfamily. It depends on Mg(2+) as a cofactor.

It localises to the cell membrane. The catalysed reaction is UDP-N-acetyl-alpha-D-muramoyl-L-alanyl-gamma-D-glutamyl-L-lysyl-D-alanyl-D-alanine + di-trans,octa-cis-undecaprenyl phosphate = Mur2Ac(oyl-L-Ala-gamma-D-Glu-L-Lys-D-Ala-D-Ala)-di-trans,octa-cis-undecaprenyl diphosphate + UMP. The protein operates within cell wall biogenesis; peptidoglycan biosynthesis. Functionally, catalyzes the initial step of the lipid cycle reactions in the biosynthesis of the cell wall peptidoglycan: transfers peptidoglycan precursor phospho-MurNAc-pentapeptide from UDP-MurNAc-pentapeptide onto the lipid carrier undecaprenyl phosphate, yielding undecaprenyl-pyrophosphoryl-MurNAc-pentapeptide, known as lipid I. The chain is Phospho-N-acetylmuramoyl-pentapeptide-transferase from Streptococcus mutans serotype c (strain ATCC 700610 / UA159).